We begin with the raw amino-acid sequence, 142 residues long: MFLGTHTPRLDDKGRLILPAKFRDELAGGVVITKGQERCLYVFPAPEFQRIADQLRAQPMTHKAARAYSRVFFASAHDEVPDKQGRVTIPGHLRDYAALDRDLVVIGAHTRVEIWDRVAWESYLAESEDDFADIEEGVLPGL.

2 SpoVT-AbrB domains span residues 5 to 47 (THTP…PAPE) and 76 to 119 (AHDE…DRVA).

Belongs to the MraZ family. As to quaternary structure, forms oligomers.

The protein resides in the cytoplasm. It is found in the nucleoid. This chain is Transcriptional regulator MraZ, found in Salinispora arenicola (strain CNS-205).